The following is an 89-amino-acid chain: Small ribosomal subunit protein uS15 (89 aa).

The protein belongs to the universal ribosomal protein uS15 family. Part of the 30S ribosomal subunit. Forms a bridge to the 50S subunit in the 70S ribosome, contacting the 23S rRNA.

Its function is as follows. One of the primary rRNA binding proteins, it binds directly to 16S rRNA where it helps nucleate assembly of the platform of the 30S subunit by binding and bridging several RNA helices of the 16S rRNA. In terms of biological role, forms an intersubunit bridge (bridge B4) with the 23S rRNA of the 50S subunit in the ribosome. The protein is Small ribosomal subunit protein uS15 of Shewanella loihica (strain ATCC BAA-1088 / PV-4).